The following is a 400-amino-acid chain: Elongation factor Tu (400 aa).

The tr-type G domain occupies 10-209 (KEHVNIGTIG…QVDNWIDAPL (200 aa)). The interval 19 to 26 (GHVDHGKT) is G1. Residue 19 to 26 (GHVDHGKT) coordinates GTP. Threonine 26 is a Mg(2+) binding site. The tract at residues 61-65 (GITIN) is G2. Residues 82–85 (DCPG) are G3. Residues 82–86 (DCPGH) and 137–140 (NKVD) each bind GTP. Residues 137–140 (NKVD) are G4. Positions 179–181 (SAL) are G5.

It belongs to the TRAFAC class translation factor GTPase superfamily. Classic translation factor GTPase family. EF-Tu/EF-1A subfamily. As to quaternary structure, monomer.

The protein resides in the cytoplasm. It catalyses the reaction GTP + H2O = GDP + phosphate + H(+). In terms of biological role, GTP hydrolase that promotes the GTP-dependent binding of aminoacyl-tRNA to the A-site of ribosomes during protein biosynthesis. This Mycoplasma mobile (strain ATCC 43663 / 163K / NCTC 11711) (Mesomycoplasma mobile) protein is Elongation factor Tu.